The sequence spans 52 residues: DNA-directed RNA polymerase subunit Rpo12 (52 aa).

3 residues coordinate Zn(2+): Cys-13, Cys-30, and Cys-33.

The protein belongs to the archaeal Rpo12/eukaryotic RPC10 RNA polymerase subunit family. In terms of assembly, part of the RNA polymerase complex. Requires Zn(2+) as cofactor.

It localises to the cytoplasm. The catalysed reaction is RNA(n) + a ribonucleoside 5'-triphosphate = RNA(n+1) + diphosphate. In terms of biological role, DNA-dependent RNA polymerase (RNAP) catalyzes the transcription of DNA into RNA using the four ribonucleoside triphosphates as substrates. The sequence is that of DNA-directed RNA polymerase subunit Rpo12 from Pyrobaculum arsenaticum (strain DSM 13514 / JCM 11321 / PZ6).